The sequence spans 417 residues: Gamma-glutamyl phosphate reductase (417 aa).

It belongs to the gamma-glutamyl phosphate reductase family.

It localises to the cytoplasm. It carries out the reaction L-glutamate 5-semialdehyde + phosphate + NADP(+) = L-glutamyl 5-phosphate + NADPH + H(+). It functions in the pathway amino-acid biosynthesis; L-proline biosynthesis; L-glutamate 5-semialdehyde from L-glutamate: step 2/2. Catalyzes the NADPH-dependent reduction of L-glutamate 5-phosphate into L-glutamate 5-semialdehyde and phosphate. The product spontaneously undergoes cyclization to form 1-pyrroline-5-carboxylate. The protein is Gamma-glutamyl phosphate reductase of Desulfitobacterium hafniense (strain Y51).